Consider the following 484-residue polypeptide: Glutamate mutase epsilon subunit (484 aa).

Residue R66 participates in L-glutamate binding. Position 68 (G68) interacts with adenosylcob(III)alamin. R100 provides a ligand contact to L-glutamate. N123 is an adenosylcob(III)alamin binding site. Residues 149 to 150 (RH), E171, and Y177 contribute to the L-glutamate site. P180 contacts adenosylcob(III)alamin. Y181 serves as a coordination point for L-glutamate. F297, K326, E330, and I334 together coordinate adenosylcob(III)alamin.

Belongs to the methylaspartate mutase GlmE subunit family. Heterotetramer composed of 2 epsilon subunits (GlmE) and 2 sigma subunits (GlmS). GlmE exists as a homodimer and GlmS as a monomer. Adenosylcob(III)alamin is required as a cofactor.

It catalyses the reaction (2S,3S)-3-methyl-L-aspartate = L-glutamate. It participates in amino-acid degradation; L-glutamate degradation via mesaconate pathway; acetate and pyruvate from L-glutamate: step 1/4. Its function is as follows. Catalyzes the carbon skeleton rearrangement of L-glutamate to L-threo-3-methylaspartate ((2S,3S)-3-methylaspartate). In Desulfitobacterium hafniense (strain Y51), this protein is Glutamate mutase epsilon subunit.